Consider the following 159-residue polypeptide: MDDAEILVDVQVVPQYAAVVDATLVERAVAQTLRTDDVAGPVEISILITDDADVHRLNQTYRGVDAPTDVLSFAEDDDHSFVRPPDAPRYLGDIAISWDRVVAQAAEYGHSRERELAFLVVHGVLHLLGYDHERGPVDEADMRAREEAILGALGLSREG.

Zn(2+) contacts are provided by H122, H126, and H132.

The protein belongs to the endoribonuclease YbeY family. Requires Zn(2+) as cofactor.

The protein localises to the cytoplasm. In terms of biological role, single strand-specific metallo-endoribonuclease involved in late-stage 70S ribosome quality control and in maturation of the 3' terminus of the 16S rRNA. The sequence is that of Endoribonuclease YbeY from Roseiflexus castenholzii (strain DSM 13941 / HLO8).